The following is a 201-amino-acid chain: MATRPSSLVDSLEDEEDPQTLRRERPGSPRPRKVPRNALTQPVDQLLKDLRKNPSMISDPDQRTGREQLSNDELIKKLVTELAENSMIEAEEVRGTLGDISARIEAGFESLSALQVETIQTAQRCDHSDSIRILGENIKILDRSMKTMMETMKLMMEKVDLLYASTAVGTSAPMLPSHPAPPRIYPQLPSAPTTDEWDIIP.

2 disordered regions span residues 1–70 and 176–201; these read MATR…EQLS and PSHP…DIIP. Short sequence motifs (nuclear localization signal) lie at residues 29 to 36 and 181 to 193; these read PRPRKVPR and PPRI…SAPT.

In terms of assembly, homomultimer; only active in its oligomeric state. Interacts with nucleoprotein/N. Interacts with matrix/M protein. Interacts with host TBK1. Interacts with polymerase L. Interacts with host HMGB1; this interaction is required to stabilize RNP on chromosomes. In terms of processing, phosphorylated by host PKC epsilon and casein kinase II.

It is found in the host nucleus. Its subcellular location is the host cytoplasm. In terms of biological role, essential component of the RNA polymerase transcription and replication complex. Acts as a scaffold which brings L in close proximity to the N-RNA complex. Plays a role in the segregation of the viral genome in host daughter cells during mitosis by interacting with host HMGB1, a host chromatin-remodeling DNA architectural protein, thereby stabilizing RNP on chromosomes. Interacts with host TBK1 and thus interferes with activation of cellular antiviral state. Inhibits cellular histone acetyltransferase activities. This Bos taurus (Bovine) protein is Phosphoprotein (P/X).